The primary structure comprises 139 residues: Large ribosomal subunit protein uL16 (139 aa).

A compositionally biased stretch (basic residues) spans 1–16 (MLIPKRTKYRKQHRPV). Residues 1–22 (MLIPKRTKYRKQHRPVRSGMSK) form a disordered region.

The protein belongs to the universal ribosomal protein uL16 family. Part of the 50S ribosomal subunit.

Functionally, binds 23S rRNA and is also seen to make contacts with the A and possibly P site tRNAs. This is Large ribosomal subunit protein uL16 from Bifidobacterium longum subsp. infantis (strain ATCC 15697 / DSM 20088 / JCM 1222 / NCTC 11817 / S12).